We begin with the raw amino-acid sequence, 361 residues long: Phospho-N-acetylmuramoyl-pentapeptide-transferase (361 aa).

A run of 10 helical transmembrane segments spans residues 25 to 45 (TGGA…WIID), 72 to 92 (TPTM…LLWA), 95 to 115 (LNPY…VGFY), 135 to 155 (LLIE…LGRA), 169 to 189 (VMLN…VGAG), 200 to 220 (GLAI…SYLA), 240 to 260 (LAVL…FNAP), 264 to 284 (IFMG…IAVA), 289 to 309 (IVLA…IVQV), and 338 to 358 (QIVI…LSTL).

It belongs to the glycosyltransferase 4 family. MraY subfamily. Requires Mg(2+) as cofactor.

The protein localises to the cell inner membrane. The enzyme catalyses UDP-N-acetyl-alpha-D-muramoyl-L-alanyl-gamma-D-glutamyl-meso-2,6-diaminopimeloyl-D-alanyl-D-alanine + di-trans,octa-cis-undecaprenyl phosphate = di-trans,octa-cis-undecaprenyl diphospho-N-acetyl-alpha-D-muramoyl-L-alanyl-D-glutamyl-meso-2,6-diaminopimeloyl-D-alanyl-D-alanine + UMP. It functions in the pathway cell wall biogenesis; peptidoglycan biosynthesis. Catalyzes the initial step of the lipid cycle reactions in the biosynthesis of the cell wall peptidoglycan: transfers peptidoglycan precursor phospho-MurNAc-pentapeptide from UDP-MurNAc-pentapeptide onto the lipid carrier undecaprenyl phosphate, yielding undecaprenyl-pyrophosphoryl-MurNAc-pentapeptide, known as lipid I. This chain is Phospho-N-acetylmuramoyl-pentapeptide-transferase, found in Rhodopseudomonas palustris (strain ATCC BAA-98 / CGA009).